Reading from the N-terminus, the 377-residue chain is Chaperone protein DnaJ (377 aa).

The J domain occupies 5–70 (DYYEILGVSR…QKRAAYDQYG (66 aa)). The CR-type zinc-finger motif lies at 132–210 (GVTKEIRIPT…CHGHGRIEKS (79 aa)). 8 residues coordinate Zn(2+): C145, C148, C162, C165, C184, C187, C198, and C201. CXXCXGXG motif repeat units lie at residues 145-152 (CDVCHGSG), 162-169 (CPTCHGAG), 184-191 (CPHCHGRG), and 198-205 (CNKCHGHG).

Belongs to the DnaJ family. As to quaternary structure, homodimer. Zn(2+) is required as a cofactor.

It localises to the cytoplasm. Participates actively in the response to hyperosmotic and heat shock by preventing the aggregation of stress-denatured proteins and by disaggregating proteins, also in an autonomous, DnaK-independent fashion. Unfolded proteins bind initially to DnaJ; upon interaction with the DnaJ-bound protein, DnaK hydrolyzes its bound ATP, resulting in the formation of a stable complex. GrpE releases ADP from DnaK; ATP binding to DnaK triggers the release of the substrate protein, thus completing the reaction cycle. Several rounds of ATP-dependent interactions between DnaJ, DnaK and GrpE are required for fully efficient folding. Also involved, together with DnaK and GrpE, in the DNA replication of plasmids through activation of initiation proteins. The polypeptide is Chaperone protein DnaJ (Edwardsiella ictaluri (strain 93-146)).